The sequence spans 364 residues: Peptide chain release factor 2 (364 aa).

N5-methylglutamine is present on glutamine 251.

The protein belongs to the prokaryotic/mitochondrial release factor family. Post-translationally, methylated by PrmC. Methylation increases the termination efficiency of RF2.

It is found in the cytoplasm. Peptide chain release factor 2 directs the termination of translation in response to the peptide chain termination codons UGA and UAA. This Buchnera aphidicola subsp. Schizaphis graminum (strain Sg) protein is Peptide chain release factor 2 (prfB).